Consider the following 53-residue polypeptide: Rubredoxin (53 aa).

The Rubredoxin-like domain maps to 1-53 (MQKFECTLCGYIYDPALVGPDTPDQDGAFEDVSENWVCPLCGAGKEDFEVYED). 4 residues coordinate Fe cation: Cys-6, Cys-9, Cys-38, and Cys-41.

It belongs to the rubredoxin family. Fe(3+) is required as a cofactor.

Its function is as follows. Rubredoxin is a small nonheme, iron protein lacking acid-labile sulfide. Its single Fe, chelated to 4 Cys, functions as an electron acceptor and may also stabilize the conformation of the molecule. This chain is Rubredoxin, found in Peptoniphilus asaccharolyticus (Peptostreptococcus asaccharolyticus).